A 110-amino-acid polypeptide reads, in one-letter code: U1-lycotoxin-Ls1ii (110 aa).

The signal sequence occupies residues 1–20 (MKFVLLFGVLLVTLFSYSSA). Positions 21–44 (EMLDDFDQADEDELLSLIEKEEAR) are excised as a propeptide. 4 cysteine pairs are disulfide-bonded: Cys-47–Cys-62, Cys-54–Cys-71, Cys-61–Cys-89, and Cys-73–Cys-87.

The protein belongs to the neurotoxin 19 (CSTX) family. 03 subfamily. Expressed by the venom gland.

Its subcellular location is the secreted. The sequence is that of U1-lycotoxin-Ls1ii from Lycosa singoriensis (Wolf spider).